A 106-amino-acid chain; its full sequence is Large ribosomal subunit protein P1A (106 aa).

An N-acetylserine modification is found at serine 2. The tract at residues 73–106 is disordered; sequence GGVAGGEAGEAEAEKEEEEAKEESDDDMGFGLFD. Positions 81 to 100 are enriched in acidic residues; it reads GEAEAEKEEEEAKEESDDDM. The residue at position 96 (serine 96) is a Phosphoserine.

It belongs to the eukaryotic ribosomal protein P1/P2 family. As to quaternary structure, component of the large ribosomal subunit (LSU). Mature yeast ribosomes consist of a small (40S) and a large (60S) subunit. The 40S small subunit contains 1 molecule of ribosomal RNA (18S rRNA) and 33 different proteins (encoded by 57 genes). The large 60S subunit contains 3 rRNA molecules (25S, 5.8S and 5S rRNA) and 46 different proteins (encoded by 81 genes). The 5 acidic ribosomal P-proteins form the stalk structure of the 60S subunit. They are organized as a pentameric complex in which uL10/P0 interacts with 2 heterodimers, P1A-P2B and P1B-P2A. N-terminally acetylated by acetyltransferase NatA.

The protein resides in the cytoplasm. Its function is as follows. Component of the ribosome, a large ribonucleoprotein complex responsible for the synthesis of proteins in the cell. The small ribosomal subunit (SSU) binds messenger RNAs (mRNAs) and translates the encoded message by selecting cognate aminoacyl-transfer RNA (tRNA) molecules. The large subunit (LSU) contains the ribosomal catalytic site termed the peptidyl transferase center (PTC), which catalyzes the formation of peptide bonds, thereby polymerizing the amino acids delivered by tRNAs into a polypeptide chain. The nascent polypeptides leave the ribosome through a tunnel in the LSU and interact with protein factors that function in enzymatic processing, targeting, and the membrane insertion of nascent chains at the exit of the ribosomal tunnel. This is Large ribosomal subunit protein P1A from Saccharomyces cerevisiae (strain ATCC 204508 / S288c) (Baker's yeast).